Reading from the N-terminus, the 498-residue chain is PE-PGRS family protein PE_PGRS33 (498 aa).

The tract at residues 1 to 30 (MSFVVTIPEALAAVATDLAGIGSTIGTANA) is essential for translocation to the cell surface. Residues 1–93 (MSFVVTIPEA…AGSYAAAEAA (93 aa)) enclose the PE domain. Residues 140–260 (GNGGAGGSGA…GLFFGVGGAG (121 aa)) form an interacts with TLR2 region.

Belongs to the mycobacterial PE family. PGRS subfamily. Interacts with human TLR2.

Its subcellular location is the secreted. The protein resides in the cell wall. It is found in the cell surface. It localises to the cell outer membrane. Binding of Ca(2+) to PE_PGRS33 induces conformational changes and increases affinity for TLR2. In terms of biological role, induces TNF-alpha release through human Toll-like receptor 2 (TLR2) signaling pathway, leading to macrophage apoptosis. The signaling pathway involves TLR2-dependent activation of the mitogen-activated protein kinase kinase kinase 5 (ASK1), which activates the p38 and JNK MAPKs, leading to enhanced expression of TNF-alpha and tumor necrosis factor receptor superfamily member 1A (TNFRI) genes. Signals are amplified through classical caspase 8-dependent mitochondrial release of cytochrome c, leading to the activation of caspases 9 and 3. Mediates Ca(2+)-dependent up-regulation of the anti-inflammatory cytokine IL-10. Mediates entry into macrophages in a TLR2-dependent mechanism and activates the TLR2-dependent pro-adhesive pathway. In Mycobacterium tuberculosis (strain ATCC 25618 / H37Rv), this protein is PE-PGRS family protein PE_PGRS33.